The sequence spans 809 residues: MSKTVNFRATKNFYLQFVSVSSRDTSCIPCIHLFFDSKRYVFGSVGEGCQRAILSQQLRLSKIKDVFLMQGSSISSPDTYDSSSSSSTTSVSDMLQLDDRDKVIVSERNSMCSTVNYPTWWDSCGGFPGFLLSLNDISEPGETGEASPFVLHGPSEVHQFLSSMRHFTYHTNVNLTVQGYTSAEAPVFVDENICVTPVVVSLVKNSFKKRKHENINRGTNARPLKEDRANTSPHWYSHVSNDTSFVVENAMYNTPAPLEPDKPELFISYIVQSHPTPGKFDAAKAKSLGITKGLDCGRLARGEPVTLENGKTVYPKEVIGPSIPGSSFFIIHCPNELVIDLVIENHKWTNAPKPVCVIHSVTPEVYKNPRYQSWISSFPSEVSHLIASTEVNEVINYPRSAVAIATLNLLDSKVFPLGFNCYEVKNVQKNNRIAFAKPKLRFAFGKKTGIDDSEVGVSIEELKDKILKEKPDYKSFVEEAQKYVSDKPKAPSFAGSDIQICTLGTGSAMPSLYRNVSSTYVRIPVDKKCMEDSAISMKNILLDCGEGTLGRLSRQYGDNLKYEIASLRWIYISHMHADHHAGVIGVLKAWTKYSDGRSKLFITAPPQFEFWLLEYSRIDYLPLSNIVFISNSALRTDRKPSALESSRLSSLFKEFDLVSFRTVPAIHCPYSYCMEITNSSGWKIAYSGDTRPSEDFANIAKDSTLLIHEATLEDSMHEIAIKKQHSTYSEALEVAKKAGTKNVILTHFSQRYPKLPDIDISTEDLHIALAFDGMTLKISDISLFRYFGKPLAYLFNEENLKEESDPLKF.

The segment at 74-93 (ISSPDTYDSSSSSSTTSVSD) is disordered.

This sequence belongs to the RNase Z family. Zn(2+) is required as a cofactor.

The protein localises to the nucleus. It is found in the cytoplasm. It catalyses the reaction Endonucleolytic cleavage of RNA, removing extra 3' nucleotides from tRNA precursor, generating 3' termini of tRNAs. A 3'-hydroxy group is left at the tRNA terminus and a 5'-phosphoryl group is left at the trailer molecule.. Functionally, zinc phosphodiesterase, which displays some tRNA 3'-processing endonuclease activity. May be involved in tRNA maturation, by removing a 3'-trailer from precursor tRNA. The protein is Ribonuclease Z 1 (trz1) of Schizosaccharomyces pombe (strain 972 / ATCC 24843) (Fission yeast).